The chain runs to 136 residues: Large ribosomal subunit protein uL16 (136 aa).

It belongs to the universal ribosomal protein uL16 family. As to quaternary structure, part of the 50S ribosomal subunit.

Functionally, binds 23S rRNA and is also seen to make contacts with the A and possibly P site tRNAs. This is Large ribosomal subunit protein uL16 from Ehrlichia canis (strain Jake).